The following is a 700-amino-acid chain: Pentatricopeptide repeat-containing protein 1, mitochondrial (700 aa).

Residues 49–93 are disordered; that stretch reads SSSQLPLGQERQENTGSLGSDPSHSNSTATQEEDEEEEESFGTLS. Over residues 62–78 the composition is skewed to polar residues; sequence NTGSLGSDPSHSNSTAT. The span at 79 to 88 shows a compositional bias: acidic residues; sequence QEEDEEEEES. 6 PPR repeats span residues 135 to 171, 172 to 206, 207 to 245, 246 to 280, 281 to 317, and 318 to 354; these read TPYW…RLQP, MESN…DLEP, SDAT…NFEL, NLKT…GHVV, TEET…GLQP, and SRDS…ATVL. The interval 393 to 414 is disordered; it reads SQALGPPEPPEARVPGKAQPEV. PPR repeat units follow at residues 519 to 553, 554 to 585, and 586 to 620; these read DLTF…GLVP, NLQT…QVTP, and NTHI…RVPV. Residues 672-700 are disordered; it reads HPWQKFRTKPQGDQDTGKEADDGCALGGR. Basic and acidic residues predominate over residues 681 to 692; it reads PQGDQDTGKEAD.

It belongs to the PTCD1 family. As to quaternary structure, associates with mitochondrial leucine tRNAs. Interacts with ELAC2. In terms of tissue distribution, abundant in testes, skeletal muscle and heart.

The protein resides in the mitochondrion. The protein localises to the mitochondrion matrix. In terms of biological role, mitochondrial protein implicated in negative regulation of leucine tRNA levels, as well as negative regulation of mitochondria-encoded proteins and COX activity. Also affects the 3'-processing of mitochondrial tRNAs. This chain is Pentatricopeptide repeat-containing protein 1, mitochondrial (PTCD1), found in Homo sapiens (Human).